The sequence spans 338 residues: Glyceraldehyde-3-phosphate dehydrogenase GAPC2, cytosolic (338 aa).

NAD(+) is bound by residues 15 to 16, D37, and R84; that span reads RI. 155–157 is a D-glyceraldehyde 3-phosphate binding site; sequence SCT. The active-site Nucleophile is C156. At C156 the chain carries S-glutathionyl cysteine; transient; alternate. An S-nitrosocysteine; transient; alternate modification is found at C156. An S-nitrosocysteine; transient modification is found at C160. Residues T186, 215–216, and R238 each bind D-glyceraldehyde 3-phosphate; that span reads TG. N320 is an NAD(+) binding site.

The protein belongs to the glyceraldehyde-3-phosphate dehydrogenase family. Homotetramer. Interacts with PLDDELTA. Binds to DPB3-1/NF-YC10 in response to heat-stress; this interaction promotes DPB3-1/NF-YC10 DNA-binding ability to its target promoter. Post-translationally, S-glutathionylation at Cys-156 in the presence of oxidized glutathione (GSSG). S-nitrosylation at Cys-156 and Cys-160 in the presence of S-nitrosoglutathione (GSNO) or sodium nitroprusside (SNP). These reactions may be both a protective mechanism against irreversible oxidation and a mean to store inhibited enzyme in a recoverable form.

The protein localises to the cytoplasm. Its subcellular location is the nucleus. It catalyses the reaction D-glyceraldehyde 3-phosphate + phosphate + NAD(+) = (2R)-3-phospho-glyceroyl phosphate + NADH + H(+). The protein operates within carbohydrate degradation; glycolysis; pyruvate from D-glyceraldehyde 3-phosphate: step 1/5. With respect to regulation, inhibition by oxidized glutathione (GSSG), S-nitrosoglutathione (GSNO) and hydrogen peroxide. Its function is as follows. Key enzyme in glycolysis that catalyzes the first step of the pathway by converting D-glyceraldehyde 3-phosphate (G3P) into 3-phospho-D-glyceroyl phosphate. Essential for the maintenance of cellular ATP levels and carbohydrate metabolism. Binds DNA in vitro. Together with DNA polymerase II subunit B3-1 (DPB3-1) and GAPC1, enhances heat tolerance and promotes the expression of heat-inducible genes. The chain is Glyceraldehyde-3-phosphate dehydrogenase GAPC2, cytosolic from Arabidopsis thaliana (Mouse-ear cress).